A 215-amino-acid chain; its full sequence is N-(5'-phosphoribosyl)anthranilate isomerase (215 aa).

The protein belongs to the TrpF family.

It catalyses the reaction N-(5-phospho-beta-D-ribosyl)anthranilate = 1-(2-carboxyphenylamino)-1-deoxy-D-ribulose 5-phosphate. It functions in the pathway amino-acid biosynthesis; L-tryptophan biosynthesis; L-tryptophan from chorismate: step 3/5. In Chlorobium phaeobacteroides (strain DSM 266 / SMG 266 / 2430), this protein is N-(5'-phosphoribosyl)anthranilate isomerase.